The chain runs to 292 residues: tRNA pseudouridine synthase B (292 aa).

Asp38 serves as the catalytic Nucleophile.

The protein belongs to the pseudouridine synthase TruB family. Type 1 subfamily.

It carries out the reaction uridine(55) in tRNA = pseudouridine(55) in tRNA. Responsible for synthesis of pseudouridine from uracil-55 in the psi GC loop of transfer RNAs. In Streptococcus pneumoniae serotype 4 (strain ATCC BAA-334 / TIGR4), this protein is tRNA pseudouridine synthase B.